A 1218-amino-acid chain; its full sequence is Coatomer subunit alpha-1 (1218 aa).

WD repeat units follow at residues 7–48 (TKSN…DRFD), 49–88 (EHDG…CLFT), 91–132 (GHLD…AVLT), 133–172 (GHNH…KKTV), 202–241 (GHDR…AWEV), 246–285 (GHMN…GIQT), 288–326 (REHD…PAFS), 363–404 (SLNQ…AGRA), and 450–489 (PLPI…GELQ). The tract at residues 857–882 (NGGDGFDAEEGEANEEDGEEGGWDLE) is disordered. A compositionally biased stretch (acidic residues) spans 862–882 (FDAEEGEANEEDGEEGGWDLE).

Oligomeric complex that consists of at least the alpha, beta, beta', gamma, delta, epsilon and zeta subunits.

The protein localises to the cytoplasm. It is found in the golgi apparatus membrane. The protein resides in the cytoplasmic vesicle. It localises to the COPI-coated vesicle membrane. The coatomer is a cytosolic protein complex that binds to dilysine motifs and reversibly associates with Golgi non-clathrin-coated vesicles, which further mediate biosynthetic protein transport from the ER, via the Golgi up to the trans Golgi network. Coatomer complex is required for budding from Golgi membranes, and is essential for the retrograde Golgi-to-ER transport of dilysine-tagged proteins. This is Coatomer subunit alpha-1 from Oryza sativa subsp. japonica (Rice).